A 94-amino-acid polypeptide reads, in one-letter code: Citrate lyase acyl carrier protein (94 aa).

Serine 14 is subject to O-(phosphoribosyl dephospho-coenzyme A)serine.

This sequence belongs to the CitD family. Oligomer with a subunit composition of (alpha,beta,gamma)6.

Its subcellular location is the cytoplasm. Functionally, covalent carrier of the coenzyme of citrate lyase. The polypeptide is Citrate lyase acyl carrier protein (Fusobacterium nucleatum subsp. nucleatum (strain ATCC 25586 / DSM 15643 / BCRC 10681 / CIP 101130 / JCM 8532 / KCTC 2640 / LMG 13131 / VPI 4355)).